Here is a 269-residue protein sequence, read N- to C-terminus: Thymidylate synthase (269 aa).

DUMP is bound by residues Arg-21 and 125 to 126; that span reads RR. The active-site Nucleophile is the Cys-145. Residues 171-174, Asn-182, and 212-214 each bind dUMP; these read RSGD and HVY. Asp-174 is a binding site for (6R)-5,10-methylene-5,6,7,8-tetrahydrofolate. Ala-268 is a (6R)-5,10-methylene-5,6,7,8-tetrahydrofolate binding site.

The protein belongs to the thymidylate synthase family. Bacterial-type ThyA subfamily. Homodimer.

It is found in the cytoplasm. It carries out the reaction dUMP + (6R)-5,10-methylene-5,6,7,8-tetrahydrofolate = 7,8-dihydrofolate + dTMP. It functions in the pathway pyrimidine metabolism; dTTP biosynthesis. In terms of biological role, catalyzes the reductive methylation of 2'-deoxyuridine-5'-monophosphate (dUMP) to 2'-deoxythymidine-5'-monophosphate (dTMP) while utilizing 5,10-methylenetetrahydrofolate (mTHF) as the methyl donor and reductant in the reaction, yielding dihydrofolate (DHF) as a by-product. This enzymatic reaction provides an intracellular de novo source of dTMP, an essential precursor for DNA biosynthesis. The sequence is that of Thymidylate synthase from Cutibacterium acnes (strain DSM 16379 / KPA171202) (Propionibacterium acnes).